The following is a 946-amino-acid chain: Bifunctional glutamine synthetase adenylyltransferase/adenylyl-removing enzyme (946 aa).

Residues 1–440 form an adenylyl removase region; the sequence is MKPLSSPLQQ…VFNELIGDDE (440 aa). The interval 449–946 is adenylyl transferase; that stretch reads SEQWRELWQD…ASWQKWLVEE (498 aa).

This sequence belongs to the GlnE family. Requires Mg(2+) as cofactor.

The catalysed reaction is [glutamine synthetase]-O(4)-(5'-adenylyl)-L-tyrosine + phosphate = [glutamine synthetase]-L-tyrosine + ADP. It catalyses the reaction [glutamine synthetase]-L-tyrosine + ATP = [glutamine synthetase]-O(4)-(5'-adenylyl)-L-tyrosine + diphosphate. Involved in the regulation of glutamine synthetase GlnA, a key enzyme in the process to assimilate ammonia. When cellular nitrogen levels are high, the C-terminal adenylyl transferase (AT) inactivates GlnA by covalent transfer of an adenylyl group from ATP to specific tyrosine residue of GlnA, thus reducing its activity. Conversely, when nitrogen levels are low, the N-terminal adenylyl removase (AR) activates GlnA by removing the adenylyl group by phosphorolysis, increasing its activity. The regulatory region of GlnE binds the signal transduction protein PII (GlnB) which indicates the nitrogen status of the cell. This chain is Bifunctional glutamine synthetase adenylyltransferase/adenylyl-removing enzyme, found in Escherichia coli (strain SE11).